The primary structure comprises 320 residues: MDGDELTEQETALYDRQIRVWGAGAQRRLSKSHVLVSGIKGTVAEFCKNIVLAGVGSVTLLDDRLVTTEVFNANFLILPDENAYVGKTVAEICCDSLKDFNPMVHVSIEKGDLSTLGVDFFEKFDVVVIGYSSRATKKAVNEKCRNLAKDVAFYTVDCRGSCGEIFVDLQNYKYTKKKLDETVECELTFPSFEEAVSVPWKPMPRRTAKLYFAMRVIELFEETEGRKPGECSLSDLPRVLKLKKELCEGNSVSENHIPDILLERLVSNNTEFPPACAIIGGILGQEVIKVISGKGEPLKNFFYFDAEDGKGVIEDLSHKL.

M1 carries the post-translational modification N-acetylmethionine.

This sequence belongs to the ubiquitin-activating E1 family. In terms of assembly, heterodimer of SAE1A or SAE1B and SAE2. The complex binds SUMO proteins via SAE2.

The protein resides in the nucleus. The protein operates within protein modification; protein sumoylation. Its function is as follows. The dimeric enzyme acts as an E1 ligase for SUMO1 and SUMO2. It mediates ATP-dependent activation of SUMO proteins and formation of a thioester with a conserved cysteine residue on SAE2. Functionally redundant with its paralog SAE1A. The chain is SUMO-activating enzyme subunit 1B-1 (SAE1B-1) from Arabidopsis thaliana (Mouse-ear cress).